A 270-amino-acid chain; its full sequence is ATP synthase subunit a (270 aa).

5 consecutive transmembrane segments (helical) span residues 38-58 (VHIDSLFFSWFTGLIFLGIFY), 98-118 (IAPLALTIFCWVFLMNVMDLV), 143-163 (DVNITMAMALGVFALMIYYSI), 208-228 (LFGNMFAGEVVFILCAAMLPW), and 239-259 (AIFHILVITIQAFVFMMLTIV).

It belongs to the ATPase A chain family. F-type ATPases have 2 components, CF(1) - the catalytic core - and CF(0) - the membrane proton channel. CF(1) has five subunits: alpha(3), beta(3), gamma(1), delta(1), epsilon(1). CF(0) has three main subunits: a(1), b(2) and c(9-12). The alpha and beta chains form an alternating ring which encloses part of the gamma chain. CF(1) is attached to CF(0) by a central stalk formed by the gamma and epsilon chains, while a peripheral stalk is formed by the delta and b chains.

It localises to the cell inner membrane. Its function is as follows. Key component of the proton channel; it plays a direct role in the translocation of protons across the membrane. This Vibrio alginolyticus protein is ATP synthase subunit a.